Reading from the N-terminus, the 558-residue chain is Dihydroxy-acid dehydratase (558 aa).

Cys48 contacts [2Fe-2S] cluster. Mg(2+) is bound at residue Asp80. Cys121 is a binding site for [2Fe-2S] cluster. Positions 122 and 123 each coordinate Mg(2+). Lys123 is subject to N6-carboxylysine. Position 193 (Cys193) interacts with [2Fe-2S] cluster. Glu445 contributes to the Mg(2+) binding site. The Proton acceptor role is filled by Ser471.

This sequence belongs to the IlvD/Edd family. In terms of assembly, homodimer. It depends on [2Fe-2S] cluster as a cofactor. Mg(2+) is required as a cofactor.

The enzyme catalyses (2R)-2,3-dihydroxy-3-methylbutanoate = 3-methyl-2-oxobutanoate + H2O. It catalyses the reaction (2R,3R)-2,3-dihydroxy-3-methylpentanoate = (S)-3-methyl-2-oxopentanoate + H2O. It functions in the pathway amino-acid biosynthesis; L-isoleucine biosynthesis; L-isoleucine from 2-oxobutanoate: step 3/4. It participates in amino-acid biosynthesis; L-valine biosynthesis; L-valine from pyruvate: step 3/4. In terms of biological role, functions in the biosynthesis of branched-chain amino acids. Catalyzes the dehydration of (2R,3R)-2,3-dihydroxy-3-methylpentanoate (2,3-dihydroxy-3-methylvalerate) into 2-oxo-3-methylpentanoate (2-oxo-3-methylvalerate) and of (2R)-2,3-dihydroxy-3-methylbutanoate (2,3-dihydroxyisovalerate) into 2-oxo-3-methylbutanoate (2-oxoisovalerate), the penultimate precursor to L-isoleucine and L-valine, respectively. The chain is Dihydroxy-acid dehydratase from Prochlorococcus marinus (strain SARG / CCMP1375 / SS120).